A 376-amino-acid chain; its full sequence is Cytoplasmic tRNA 2-thiolation protein 1 (376 aa).

This sequence belongs to the TtcA family. CTU1/NCS6/ATPBD3 subfamily.

The protein localises to the cytoplasm. It functions in the pathway tRNA modification; 5-methoxycarbonylmethyl-2-thiouridine-tRNA biosynthesis. Functionally, plays a central role in 2-thiolation of mcm(5)S(2)U at tRNA wobble positions of tRNA(Lys), tRNA(Glu) and tRNA(Gln). Directly binds tRNAs and probably acts by catalyzing adenylation of tRNAs, an intermediate required for 2-thiolation. It is unclear whether it acts as a sulfurtransferase that transfers sulfur from thiocarboxylated URM1 onto the uridine of tRNAs at wobble position. Prior mcm(5) tRNA modification by the elongator complex is required for 2-thiolation. May also be involved in protein urmylation. The sequence is that of Cytoplasmic tRNA 2-thiolation protein 1 from Scheffersomyces stipitis (strain ATCC 58785 / CBS 6054 / NBRC 10063 / NRRL Y-11545) (Yeast).